The following is a 458-amino-acid chain: Retinoic acid receptor alpha (458 aa).

The segment at 1–86 (MASNGGSCPS…PPPLPRIYKP (86 aa)) is modulating. Polar residues predominate over residues 54 to 68 (TPSPATIETQSTSSE). A disordered region spans residues 54–76 (TPSPATIETQSTSSEEIVPSPPS). NR C4-type zinc fingers lie at residues 87–107 (CFVC…CEGC) and 123–147 (CHRD…LQKC). The nuclear receptor DNA-binding region spans 87 to 152 (CFVCQDKSSG…RLQKCFEVGM (66 aa)). The segment at 153–182 (SKESVRNDRNKKKKQEAPKQECTESYIITP) is hinge. Residues 183–417 (EVEDLVEKVR…PLIQEMLENS (235 aa)) enclose the NR LBD domain. The short motif at 408–416 (PLIQEMLEN) is the 9aaTAD element. The interval 417–458 (SEGLDSLTGQPPRASSLAPPPGSCSPSLSPSSNRSSPTSHSP) is disordered. Positions 440–458 (CSPSLSPSSNRSSPTSHSP) are enriched in low complexity.

This sequence belongs to the nuclear hormone receptor family. NR1 subfamily. In terms of assembly, heterodimer; with an rxr molecule. Binds DNA preferentially as a rar/rxr heterodimer. As to expression, expressed in forelimb, in the distal forelimb blastema, kidney, liver and hindlimb blastemal mesenchymal cells.

Its subcellular location is the nucleus. Receptor for retinoic acid. Retinoic acid receptors bind as heterodimers to their target response elements in response to their ligands, all-trans or 9-cis retinoic acid, and regulate gene expression in various biological processes. The rar/rxr heterodimers bind to the retinoic acid response elements (RARE) composed of tandem 5'-AGGTCA-3' sites known as DR1-DR5. Retinoic acid signaling appears to be involved in specifying proximal-distal axis in limb regeneration. The polypeptide is Retinoic acid receptor alpha (RARA) (Notophthalmus viridescens (Eastern newt)).